Consider the following 173-residue polypeptide: Alpha-crystallin A chain (173 aa).

Position 1 is an N-acetylmethionine (Met1). The required for complex formation with BFSP1 and BFSP2 stretch occupies residues 1–63 (MDVTIQHPWF…RTVLDSGISE (63 aa)). Gln6 is subject to Deamidated glutamine; partial. Ser45 is modified (phosphoserine). Gln50 is subject to Deamidated glutamine; partial. Positions 52 to 162 (LFRTVLDSGI…SHSERAIPVS (111 aa)) constitute a sHSP domain. Lys99 is subject to N6-acetyllysine. His100 contacts Zn(2+). Asn101 is modified (deamidated asparagine; partial). Positions 102 and 107 each coordinate Zn(2+). Position 122 is a phosphoserine (Ser122). At Asn123 the chain carries Deamidated asparagine; partial. A disulfide bond links Cys131 and Cys142. Position 147 is a deamidated glutamine; partial (Gln147). The tract at residues 147 to 173 (QSGMDASHSERAIPVSREEKPSSAPSS) is disordered. Over residues 153 to 167 (SHSERAIPVSREEKP) the composition is skewed to basic and acidic residues. His154 contributes to the Zn(2+) binding site. An O-linked (GlcNAc) serine glycan is attached at Ser162.

The protein belongs to the small heat shock protein (HSP20) family. Heteromer composed of three CRYAA and one CRYAB subunits. Inter-subunit bridging via zinc ions enhances stability, which is crucial as there is no protein turn over in the lens. Can also form homodimers and homotetramers (dimers of dimers) which serve as the building blocks of homooligomers. Within homooligomers, the zinc-binding motif is created from residues of 3 different molecules. His-100 and Glu-102 from one molecule are ligands of the zinc ion, and His-107 and His-154 residues from additional molecules complete the site with tetrahedral coordination geometry. Part of a complex required for lens intermediate filament formation composed of BFSP1, BFSP2 and CRYAA. Post-translationally, undergoes age-dependent proteolytical cleavage at the C-terminus.

The protein resides in the cytoplasm. The protein localises to the nucleus. Contributes to the transparency and refractive index of the lens. In its oxidized form (absence of intramolecular disulfide bond), acts as a chaperone, preventing aggregation of various proteins under a wide range of stress conditions. Required for the correct formation of lens intermediate filaments as part of a complex composed of BFSP1, BFSP2 and CRYAA. The chain is Alpha-crystallin A chain (CRYAA) from Procavia capensis (Rock hyrax).